Here is a 305-residue protein sequence, read N- to C-terminus: Aspartate carbamoyltransferase catalytic subunit (305 aa).

Carbamoyl phosphate contacts are provided by Arg-56 and Thr-57. Lys-85 serves as a coordination point for L-aspartate. The carbamoyl phosphate site is built by Arg-106, His-134, and Gln-137. Residues Arg-167 and Arg-227 each contribute to the L-aspartate site. Residues Leu-266 and Pro-267 each contribute to the carbamoyl phosphate site.

It belongs to the aspartate/ornithine carbamoyltransferase superfamily. ATCase family. Heterooligomer of catalytic and regulatory chains.

It carries out the reaction carbamoyl phosphate + L-aspartate = N-carbamoyl-L-aspartate + phosphate + H(+). The protein operates within pyrimidine metabolism; UMP biosynthesis via de novo pathway; (S)-dihydroorotate from bicarbonate: step 2/3. Its function is as follows. Catalyzes the condensation of carbamoyl phosphate and aspartate to form carbamoyl aspartate and inorganic phosphate, the committed step in the de novo pyrimidine nucleotide biosynthesis pathway. The chain is Aspartate carbamoyltransferase catalytic subunit from Thermoplasma acidophilum (strain ATCC 25905 / DSM 1728 / JCM 9062 / NBRC 15155 / AMRC-C165).